Here is an 81-residue protein sequence, read N- to C-terminus: Trefoil factor 3 (81 aa).

Residues 1 to 23 form the signal peptide; sequence MEARTFWLLVVAVLALGSSSSTG. Positions 31-74 constitute a P-type domain; the sequence is NQCAVPAKDRVDCGYPEVTPEQCNNRGCCFDSSIHGVPWCFKPL. 3 cysteine pairs are disulfide-bonded: Cys33–Cys59, Cys43–Cys58, and Cys53–Cys70.

As to quaternary structure, monomer. Homodimer; disulfide-linked.

The protein resides in the secreted. Its subcellular location is the extracellular space. It localises to the extracellular matrix. The protein localises to the cytoplasm. In terms of biological role, involved in the maintenance and repair of the intestinal mucosa. Promotes the mobility of epithelial cells in healing processes (motogen). This chain is Trefoil factor 3 (TFF3), found in Bos taurus (Bovine).